The primary structure comprises 625 residues: 1-deoxy-D-xylulose-5-phosphate synthase (625 aa).

Thiamine diphosphate is bound by residues histidine 84 and 125–127 (GHS). Aspartate 156 provides a ligand contact to Mg(2+). Residues 157-158 (GA), asparagine 185, phenylalanine 292, and glutamate 373 contribute to the thiamine diphosphate site. Asparagine 185 lines the Mg(2+) pocket.

Belongs to the transketolase family. DXPS subfamily. Homodimer. The cofactor is Mg(2+). Thiamine diphosphate serves as cofactor.

It carries out the reaction D-glyceraldehyde 3-phosphate + pyruvate + H(+) = 1-deoxy-D-xylulose 5-phosphate + CO2. The protein operates within metabolic intermediate biosynthesis; 1-deoxy-D-xylulose 5-phosphate biosynthesis; 1-deoxy-D-xylulose 5-phosphate from D-glyceraldehyde 3-phosphate and pyruvate: step 1/1. In terms of biological role, catalyzes the acyloin condensation reaction between C atoms 2 and 3 of pyruvate and glyceraldehyde 3-phosphate to yield 1-deoxy-D-xylulose-5-phosphate (DXP). The protein is 1-deoxy-D-xylulose-5-phosphate synthase of Marinomonas sp. (strain MWYL1).